The chain runs to 589 residues: F-box only protein 24 (589 aa).

The region spanning 23–69 (PISVQLFPPELVEHIVSFLPVKDLVALGQTCHYFHEVCDAEGVWRRI) is the F-box domain. The RCC1 repeat unit spans residues 386-435 (GRIFMQGNNRYGQLGTGDKMDRGEPTQVHYLQRPIALWCGLNHSLVLSQT). Residues 506–526 (VGGSPEPSQGAGAPQDPGGTA) form a disordered region.

In terms of assembly, directly interacts with SKP1 and CUL1.

Its function is as follows. Substrate-recognition component of the SCF (SKP1-CUL1-F-box protein)-type E3 ubiquitin ligase complex. In Mus musculus (Mouse), this protein is F-box only protein 24 (Fbxo24).